The sequence spans 420 residues: Tryptophan synthase beta chain (420 aa).

Lysine 100 is modified (N6-(pyridoxal phosphate)lysine).

The protein belongs to the TrpB family. As to quaternary structure, tetramer of two alpha and two beta chains. It depends on pyridoxal 5'-phosphate as a cofactor.

It catalyses the reaction (1S,2R)-1-C-(indol-3-yl)glycerol 3-phosphate + L-serine = D-glyceraldehyde 3-phosphate + L-tryptophan + H2O. The protein operates within amino-acid biosynthesis; L-tryptophan biosynthesis; L-tryptophan from chorismate: step 5/5. The beta subunit is responsible for the synthesis of L-tryptophan from indole and L-serine. In Pyrobaculum islandicum (strain DSM 4184 / JCM 9189 / GEO3), this protein is Tryptophan synthase beta chain.